Reading from the N-terminus, the 786-residue chain is Endonuclease MutS2 (786 aa).

335 to 342 is an ATP binding site; that stretch reads GPNTGGKT. One can recognise a Smr domain in the interval 711-786; it reads LDLRGERFEN…GLGVTVVELK (76 aa).

The protein belongs to the DNA mismatch repair MutS family. MutS2 subfamily. As to quaternary structure, homodimer. Binds to stalled ribosomes, contacting rRNA.

Functionally, endonuclease that is involved in the suppression of homologous recombination and thus may have a key role in the control of bacterial genetic diversity. Acts as a ribosome collision sensor, splitting the ribosome into its 2 subunits. Detects stalled/collided 70S ribosomes which it binds and splits by an ATP-hydrolysis driven conformational change. Acts upstream of the ribosome quality control system (RQC), a ribosome-associated complex that mediates the extraction of incompletely synthesized nascent chains from stalled ribosomes and their subsequent degradation. Probably generates substrates for RQC. This Bacillus cereus (strain ATCC 10987 / NRS 248) protein is Endonuclease MutS2.